Consider the following 248-residue polypeptide: Delayed minus-nitrogen induction protein 2 (248 aa).

The next 4 helical transmembrane spans lie at 26-46 (IFSN…CCSC), 110-130 (VHPV…VLTI), 144-164 (ISCL…MALA), and 186-206 (GVAA…FSLI).

This sequence belongs to the SUR7 family.

It is found in the membrane. This chain is Delayed minus-nitrogen induction protein 2 (dni2), found in Schizosaccharomyces pombe (strain 972 / ATCC 24843) (Fission yeast).